The following is a 170-amino-acid chain: Adenine phosphoribosyltransferase (170 aa).

This sequence belongs to the purine/pyrimidine phosphoribosyltransferase family. In terms of assembly, homodimer.

It is found in the cytoplasm. The catalysed reaction is AMP + diphosphate = 5-phospho-alpha-D-ribose 1-diphosphate + adenine. The protein operates within purine metabolism; AMP biosynthesis via salvage pathway; AMP from adenine: step 1/1. Its function is as follows. Catalyzes a salvage reaction resulting in the formation of AMP, that is energically less costly than de novo synthesis. The polypeptide is Adenine phosphoribosyltransferase (Fusobacterium nucleatum subsp. nucleatum (strain ATCC 25586 / DSM 15643 / BCRC 10681 / CIP 101130 / JCM 8532 / KCTC 2640 / LMG 13131 / VPI 4355)).